Here is a 306-residue protein sequence, read N- to C-terminus: MATH domain and coiled-coil domain-containing protein At3g29580 (306 aa).

The 127-residue stretch at 6–132 (DNKFTWVIKN…NGEIKIVVEF (127 aa)) folds into the MATH domain. The stretch at 253–298 (FKLDWLEKKLNEVLEKKEKEESYETRMREIEEEMKDLKAKALDVGA) forms a coiled coil.

The sequence is that of MATH domain and coiled-coil domain-containing protein At3g29580 from Arabidopsis thaliana (Mouse-ear cress).